A 427-amino-acid polypeptide reads, in one-letter code: Enolase (427 aa).

Glutamine 163 is a (2R)-2-phosphoglycerate binding site. Glutamate 205 (proton donor) is an active-site residue. Residues aspartate 242, glutamate 285, and aspartate 312 each coordinate Mg(2+). (2R)-2-phosphoglycerate-binding residues include lysine 337, arginine 366, serine 367, and lysine 388. Lysine 337 serves as the catalytic Proton acceptor.

It belongs to the enolase family. Requires Mg(2+) as cofactor.

The protein resides in the cytoplasm. It is found in the secreted. Its subcellular location is the cell surface. It carries out the reaction (2R)-2-phosphoglycerate = phosphoenolpyruvate + H2O. Its pathway is carbohydrate degradation; glycolysis; pyruvate from D-glyceraldehyde 3-phosphate: step 4/5. Catalyzes the reversible conversion of 2-phosphoglycerate (2-PG) into phosphoenolpyruvate (PEP). It is essential for the degradation of carbohydrates via glycolysis. This is Enolase from Nitrobacter hamburgensis (strain DSM 10229 / NCIMB 13809 / X14).